The chain runs to 457 residues: Adenylyltransferase and sulfurtransferase MOCS3 (457 aa).

Positions 40–60 (ANGGGNGDGLADEGGERNTGT) are disordered. Threonine 63 is subject to Phosphothreonine. Residues glycine 102, aspartate 123, 130 to 134 (SNFHR), lysine 147, and 191 to 192 (DN) each bind ATP. Residues cysteine 233 and cysteine 236 each contribute to the Zn(2+) site. Cysteine 250 acts as the Glycyl thioester intermediate; for adenylyltransferase activity in catalysis. Cysteine 309 and cysteine 312 together coordinate Zn(2+). The Rhodanese domain maps to 358-455 (ESQPHLLFDV…WTRKVDPDFP (98 aa)). Residue cysteine 414 is the Cysteine persulfide intermediate; for sulfurtransferase activity of the active site.

This sequence in the N-terminal section; belongs to the HesA/MoeB/ThiF family. UBA4 subfamily. The cofactor is Zn(2+).

The protein localises to the cytoplasm. Its subcellular location is the cytosol. It carries out the reaction [molybdopterin-synthase sulfur-carrier protein]-C-terminal Gly-Gly + ATP + H(+) = [molybdopterin-synthase sulfur-carrier protein]-C-terminal Gly-Gly-AMP + diphosphate. It catalyses the reaction [molybdopterin-synthase sulfur-carrier protein]-C-terminal Gly-Gly-AMP + S-sulfanyl-L-cysteinyl-[cysteine desulfurase] + AH2 = [molybdopterin-synthase sulfur-carrier protein]-C-terminal-Gly-aminoethanethioate + L-cysteinyl-[cysteine desulfurase] + A + AMP + 2 H(+). The protein operates within tRNA modification; 5-methoxycarbonylmethyl-2-thiouridine-tRNA biosynthesis. Its pathway is cofactor biosynthesis; molybdopterin biosynthesis. In terms of biological role, plays a central role in 2-thiolation of mcm(5)S(2)U at tRNA wobble positions of cytosolic tRNA(Lys), tRNA(Glu) and tRNA(Gln). Also essential during biosynthesis of the molybdenum cofactor. Acts by mediating the C-terminal thiocarboxylation of sulfur carriers URM1 and MOCS2A. Its N-terminus first activates URM1 and MOCS2A as acyl-adenylates (-COAMP), then the persulfide sulfur on the catalytic cysteine is transferred to URM1 and MOCS2A to form thiocarboxylation (-COSH) of their C-terminus. The reaction probably involves hydrogen sulfide that is generated from the persulfide intermediate and that acts as a nucleophile towards URM1 and MOCS2A. Subsequently, a transient disulfide bond is formed. Does not use thiosulfate as sulfur donor; NFS1 probably acting as a sulfur donor for thiocarboxylation reactions. The sequence is that of Adenylyltransferase and sulfurtransferase MOCS3 from Drosophila willistoni (Fruit fly).